A 261-amino-acid polypeptide reads, in one-letter code: Putative cysteine protease YopT-like y4zC (261 aa).

Residues 1 to 15 (MHSPISGSFTSSTQV) are compositionally biased toward polar residues. 2 disordered regions span residues 1–48 (MHSP…CPDK) and 54–73 (SKPQASDPNNPSTSSPARPS). A compositionally biased stretch (low complexity) spans 61–73 (PNNPSTSSPARPS). Catalysis depends on residues Cys-93, His-205, and Asp-220.

It belongs to the peptidase C58 family.

Its function is as follows. Potential cysteine protease, which may play a central role after invasion of host cell. This is Putative cysteine protease YopT-like y4zC from Sinorhizobium fredii (strain NBRC 101917 / NGR234).